The sequence spans 529 residues: Cytochrome P450 monooxygenase 136 (529 aa).

The chain crosses the membrane as a helical span at residues 9–29 (SPLALAVLSIATCQLALVWWY). Position 447 (cysteine 447) interacts with heme.

Belongs to the cytochrome P450 family. Heme serves as cofactor.

It localises to the membrane. It functions in the pathway secondary metabolite biosynthesis. Its function is as follows. Cytochrome P450 monooxygenase that is able to use delta(6)-protoilludene as a substrate to produce delta(6)-protoilludene-5-ol. The sequence is that of Cytochrome P450 monooxygenase 136 from Postia placenta (strain ATCC 44394 / Madison 698-R) (Brown rot fungus).